The following is a 202-amino-acid chain: Recombination protein RecR (202 aa).

Residues 61-76 (CARCNSFTEDEVCATC) form a C4-type zinc finger. Residues 84-179 (GLLCIVETPA…KVTRLARGVP (96 aa)) enclose the Toprim domain.

This sequence belongs to the RecR family.

May play a role in DNA repair. It seems to be involved in an RecBC-independent recombinational process of DNA repair. It may act with RecF and RecO. The protein is Recombination protein RecR of Bordetella pertussis (strain Tohama I / ATCC BAA-589 / NCTC 13251).